We begin with the raw amino-acid sequence, 138 residues long: Ig heavy chain V region TEPC 1017 (138 aa).

An N-terminal signal peptide occupies residues 1-20 (MGWSYIILFLVATATDVHSQ). The framework-1 stretch occupies residues 21 to 49 (VQLQQPGAELVKPGASVQLSCKASGHTFT). A disulfide bridge connects residues cysteine 41 and cysteine 115. The tract at residues 50 to 54 (NYWIH) is complementarity-determining-1. Residues 55-68 (WVKQRPGQGLEWIG) are framework-2. Positions 69–85 (EINPNDGRSNYNEKFKN) are complementarity-determining-2. The interval 86–117 (KATLTVDKSSSTAYMQLSSLTPEEFAVYYCAR) is framework-3. Positions 118–127 (SDGYYDWFVY) are complementarity-determining-3. Residues 128–138 (WGQGTLVTFSA) are framework-4.

The protein is Ig heavy chain V region TEPC 1017 of Mus musculus (Mouse).